Consider the following 354-residue polypeptide: Divinyl chlorophyll a/b light-harvesting protein PcbG (354 aa).

Transmembrane regions (helical) follow at residues 27-47 (FIAAHAGHTGLISFAAGASTL), 65-85 (IFLAHLASIGIGFDDAGVWTG), 88-108 (VASVAIVHIIASLVYAGGALS), 201-221 (VLGGHAFLAFVEITGGAFHIA), 241-261 (AVLSFSLAGIGWMAIVAAFWC), and 308-328 (LTNVHYYFGFFFLQGHLWHAI).

This sequence belongs to the PsbB/PsbC family. IsiA/Pcb subfamily. The antenna complex consists of divinyl chlorophylls (a and b) and divinyl chlorophyll a/b binding proteins and binds more divinyl chlorophyll b than does the antenna complex from high-light-adapted Prochlorococcus. The cofactor is divinyl chlorophyll a. It depends on divinyl chlorophyll b as a cofactor.

It is found in the cellular thylakoid membrane. The antenna complex functions as a light receptor, it captures and delivers excitation energy to photosystems II and I. The Prochlorales pcb genes are not related to higher plant LHCs. This Prochlorococcus marinus (strain NATL2A) protein is Divinyl chlorophyll a/b light-harvesting protein PcbG (pcbG).